Here is a 533-residue protein sequence, read N- to C-terminus: Beta-glucosidase 24 (533 aa).

The N-terminal stretch at 1-26 (MVLQKLPLMSIGLLWLLIIVGPLVNA) is a signal peptide. Glutamine 58 contributes to the a beta-D-glucoside binding site. N-linked (GlcNAc...) asparagine glycosylation is found at asparagine 64 and asparagine 88. A beta-D-glucoside-binding positions include histidine 161 and 206 to 207 (NE). Glutamate 207 (proton donor) is an active-site residue. A disulfide bond links cysteine 226 and cysteine 239. A beta-D-glucoside is bound at residue tyrosine 355. Asparagine 388 carries an N-linked (GlcNAc...) asparagine glycan. Position 427 (glutamate 427) interacts with a beta-D-glucoside. Residue glutamate 427 is the Nucleophile of the active site. 3 N-linked (GlcNAc...) asparagine glycosylation sites follow: asparagine 437, asparagine 442, and asparagine 470. A beta-D-glucoside contacts are provided by residues tryptophan 477, 484 to 485 (EW), and phenylalanine 493. N-linked (GlcNAc...) asparagine glycosylation occurs at asparagine 503. Positions 530-533 (KDEL) match the Prevents secretion from ER motif.

The protein belongs to the glycosyl hydrolase 1 family.

It is found in the endoplasmic reticulum lumen. The catalysed reaction is Hydrolysis of terminal, non-reducing beta-D-glucosyl residues with release of beta-D-glucose.. The protein is Beta-glucosidase 24 of Arabidopsis thaliana (Mouse-ear cress).